Consider the following 269-residue polypeptide: Hydroxyethylthiazole kinase (269 aa).

Position 45 (Met45) interacts with substrate. Arg121 and Thr167 together coordinate ATP. Substrate is bound at residue Gly194.

The protein belongs to the Thz kinase family. The cofactor is Mg(2+).

The enzyme catalyses 5-(2-hydroxyethyl)-4-methylthiazole + ATP = 4-methyl-5-(2-phosphooxyethyl)-thiazole + ADP + H(+). Its pathway is cofactor biosynthesis; thiamine diphosphate biosynthesis; 4-methyl-5-(2-phosphoethyl)-thiazole from 5-(2-hydroxyethyl)-4-methylthiazole: step 1/1. Functionally, catalyzes the phosphorylation of the hydroxyl group of 4-methyl-5-beta-hydroxyethylthiazole (THZ). This Bacillus mycoides (strain KBAB4) (Bacillus weihenstephanensis) protein is Hydroxyethylthiazole kinase.